A 387-amino-acid chain; its full sequence is 3-ketoacyl-CoA thiolase (387 aa).

C91 functions as the Acyl-thioester intermediate in the catalytic mechanism. Active-site proton acceptor residues include H343 and C373.

The protein belongs to the thiolase-like superfamily. Thiolase family. In terms of assembly, heterotetramer of two alpha chains (FadB) and two beta chains (FadA).

It localises to the cytoplasm. The enzyme catalyses an acyl-CoA + acetyl-CoA = a 3-oxoacyl-CoA + CoA. Its pathway is lipid metabolism; fatty acid beta-oxidation. Catalyzes the final step of fatty acid oxidation in which acetyl-CoA is released and the CoA ester of a fatty acid two carbons shorter is formed. The chain is 3-ketoacyl-CoA thiolase from Aliivibrio salmonicida (strain LFI1238) (Vibrio salmonicida (strain LFI1238)).